Reading from the N-terminus, the 456-residue chain is Na(+)-translocating NADH-quinone reductase subunit A (456 aa).

It belongs to the NqrA family. Composed of six subunits; NqrA, NqrB, NqrC, NqrD, NqrE and NqrF.

The enzyme catalyses a ubiquinone + n Na(+)(in) + NADH + H(+) = a ubiquinol + n Na(+)(out) + NAD(+). Functionally, NQR complex catalyzes the reduction of ubiquinone-1 to ubiquinol by two successive reactions, coupled with the transport of Na(+) ions from the cytoplasm to the periplasm. NqrA to NqrE are probably involved in the second step, the conversion of ubisemiquinone to ubiquinol. This is Na(+)-translocating NADH-quinone reductase subunit A from Rhodopirellula baltica (strain DSM 10527 / NCIMB 13988 / SH1).